Consider the following 1373-residue polypeptide: DNA-directed RNA polymerase subunit beta (1373 aa).

Belongs to the RNA polymerase beta chain family. The RNAP catalytic core consists of 2 alpha, 1 beta, 1 beta' and 1 omega subunit. When a sigma factor is associated with the core the holoenzyme is formed, which can initiate transcription.

The catalysed reaction is RNA(n) + a ribonucleoside 5'-triphosphate = RNA(n+1) + diphosphate. DNA-dependent RNA polymerase catalyzes the transcription of DNA into RNA using the four ribonucleoside triphosphates as substrates. The protein is DNA-directed RNA polymerase subunit beta of Rickettsia peacockii (strain Rustic).